A 358-amino-acid polypeptide reads, in one-letter code: Peptide chain release factor 1 (358 aa).

The residue at position 233 (Gln-233) is an N5-methylglutamine.

This sequence belongs to the prokaryotic/mitochondrial release factor family. Methylated by PrmC. Methylation increases the termination efficiency of RF1.

The protein localises to the cytoplasm. In terms of biological role, peptide chain release factor 1 directs the termination of translation in response to the peptide chain termination codons UAG and UAA. This Staphylococcus epidermidis (strain ATCC 35984 / DSM 28319 / BCRC 17069 / CCUG 31568 / BM 3577 / RP62A) protein is Peptide chain release factor 1.